The primary structure comprises 931 residues: Short transient receptor potential channel 6 (931 aa).

A compositionally biased stretch (low complexity) spans 1 to 23 (MSQSPAFGPRRGSSPRGAAGAAA). The segment at 1–26 (MSQSPAFGPRRGSSPRGAAGAAARRN) is disordered. The Cytoplasmic portion of the chain corresponds to 1-438 (MSQSPAFGPR…CSKMGKIMRG (438 aa)). ANK repeat units lie at residues 97-126 (IEEE…SLNV), 132-161 (MGQN…LSRV), 163-189 (DALL…FAEG), and 218-247 (HDVT…RIER). Residues 439–459 (PFMKFVAHAASFTIFLGLLVM) traverse the membrane as a helical segment. The Extracellular segment spans residues 460–487 (NAADRFEGTKLLPNETSTDNAKQLFRMK). N-linked (GlcNAc...) asparagine glycosylation is present at asparagine 473. A helical membrane pass occupies residues 488–508 (TSCFSWMEMLIISWVIGMIWA). Residues 509 to 521 (ECKEIWTQGPKEY) are Cytoplasmic-facing. A helical transmembrane segment spans residues 522-542 (LFELWNMLDFGMLAIFAASFI). The Extracellular segment spans residues 543 to 592 (ARFMAFWHASKAQSIIDANDTLKDLTKVTLGDNVKYYNLARIKWDPSDPQ). An N-linked (GlcNAc...) asparagine glycan is attached at asparagine 561. A helical transmembrane segment spans residues 593-613 (IISEGLYAIAVVLSFSRIAYI). The Cytoplasmic portion of the chain corresponds to 614-636 (LPANESFGPLQISLGRTVKDIFK). The chain crosses the membrane as a helical span at residues 637-657 (FMVIFIMVFVAFMIGMFNLYS). The Extracellular portion of the chain corresponds to 658–706 (YYIGAKQNEAFTTVEESFKTLFWAIFGLSEVKSVVINYNHKFIENIGYV). A helical membrane pass occupies residues 707–727 (LYGVYNVTMVIVLLNMLIAMI). Residues 728 to 931 (NSSFQEIEDD…MEPNQEETNR (204 aa)) lie on the Cytoplasmic side of the membrane. Serine 815 is modified (phosphoserine).

This sequence belongs to the transient receptor (TC 1.A.4) family. STrpC subfamily. TRPC6 sub-subfamily. In terms of assembly, homodimer; forms channel complex. Interacts with MX1 and RNF24. Phosphorylated by FYN, leading to an increase of TRPC6 channel activity. Expressed primarily in placenta, lung, spleen, ovary and small intestine. Expressed in podocytes and is a component of the glomerular slit diaphragm.

The protein localises to the cell membrane. The enzyme catalyses Ca(2+)(in) = Ca(2+)(out). Its activity is regulated as follows. Activated by diacylglycerol (DAG) in a membrane-delimited fashion, independently of protein kinase C. Its function is as follows. Forms a receptor-activated non-selective calcium permeant cation channel. Probably is operated by a phosphatidylinositol second messenger system activated by receptor tyrosine kinases or G-protein coupled receptors. Activated by diacylglycerol (DAG) in a membrane-delimited fashion, independently of protein kinase C. Seems not to be activated by intracellular calcium store depletion. The protein is Short transient receptor potential channel 6 of Homo sapiens (Human).